The chain runs to 311 residues: Thioredoxin reductase (311 aa).

Residue 35-42 (ERGIPGGQ) participates in FAD binding. Cys-134 and Cys-137 are oxidised to a cystine. 277–286 (DVRDKGLRQI) serves as a coordination point for FAD.

It belongs to the class-II pyridine nucleotide-disulfide oxidoreductase family. In terms of assembly, homodimer. It depends on FAD as a cofactor.

The protein localises to the cytoplasm. It carries out the reaction [thioredoxin]-dithiol + NADP(+) = [thioredoxin]-disulfide + NADPH + H(+). The sequence is that of Thioredoxin reductase (trxB) from Staphylococcus aureus (strain COL).